A 499-amino-acid polypeptide reads, in one-letter code: MEMILISLCLTTLLAFLFLKPLLKRITTTKPKLPPSPWRLPVIGNLHQLGPNPHRYLHSLSLRYGPLMLLHFGRVPVLVVSCPDVTNDIMKTHDLKFANRPKSKAINIFMEGGRDIIFGPYGEDWKSMKSLGVVHLLNNKMVRSFENLREEEIKVMTEKLEEASSSSSSVNLSKLLMTLTNDIICRITLGRKYNEEEGGIDIKNLVMTSSEFFGKFFFGDFIPSLAWIDWISGIDDKMKDINNKLDCFLDSMVQEHVDADHKEPSDFIDMLLLIQKDKTKRFKFDRSDLILILKDMFFSGTATTASQLEWTMTELMRHPECMKKLQDEINSFSTHNLNVTEKEVEKMNYLHCVIKEGLRLHPSGPLLFRLPSEDVQLKGYDISAGTHVIINAWALQRNPAIWGLDANEYRPERHFWYEFGFQRTDSKFVPFGAGRRLCPGIGFSLVLSKLALANLVKRFNWRLKVGPVGDDKPDLAEASGIDVCRKFPLIVFPSIAHTH.

The chain crosses the membrane as a helical span at residues methionine 3–leucine 23. Cysteine 438 serves as a coordination point for heme.

The protein belongs to the cytochrome P450 family. Requires heme as cofactor.

It localises to the membrane. The protein is Cytochrome P450 71A27 (CYP71A27) of Arabidopsis thaliana (Mouse-ear cress).